A 609-amino-acid chain; its full sequence is UvrABC system protein C (609 aa).

One can recognise a GIY-YIG domain in the interval 16–94 (SSAGVYRMYD…IKQYMPKYNV (79 aa)). A UVR domain is found at 203–238 (KQVISELVAKMEEAAGQQAYEQAARFRDQIMALRRV).

Belongs to the UvrC family. In terms of assembly, interacts with UvrB in an incision complex.

It is found in the cytoplasm. Functionally, the UvrABC repair system catalyzes the recognition and processing of DNA lesions. UvrC both incises the 5' and 3' sides of the lesion. The N-terminal half is responsible for the 3' incision and the C-terminal half is responsible for the 5' incision. The protein is UvrABC system protein C of Shewanella sp. (strain ANA-3).